The sequence spans 277 residues: MDIIQAIIIGIVQGLTEFLPVSSSAHLIFAQNALGVESSLAFDVFLHLGSLIAVLWFFRADIIRMIQAFLLSIGDIIQHRFKEGFYSDPYKRLVWYVIIATIPVGLVGVLFESQVESLFAGALYVPAFFLFVTGTILYLSQRMNSGEVDLSNLSLKESIFMGLGQACAILPGLSRSGTTIAAGLVIGLDKEFAAKFSFILSIPAILGAFVVQLKDIGTITDFNALAILFGFLAALISGYLAIKWLLELIQKRSLDIFAYYCWIVGIIVFMGSITHLF.

The next 8 membrane-spanning stretches (helical) occupy residues M1–V21, S38–F58, L93–S113, L118–Y138, A168–L188, E191–V211, F222–I242, and I256–L276.

Belongs to the UppP family.

The protein localises to the cell membrane. It carries out the reaction di-trans,octa-cis-undecaprenyl diphosphate + H2O = di-trans,octa-cis-undecaprenyl phosphate + phosphate + H(+). Catalyzes the dephosphorylation of undecaprenyl diphosphate (UPP). In Methanobrevibacter smithii (strain ATCC 35061 / DSM 861 / OCM 144 / PS), this protein is Undecaprenyl-diphosphatase.